A 141-amino-acid polypeptide reads, in one-letter code: Translation initiation factor IF-1, chloroplastic (141 aa).

The N-terminal 46 residues, 1–46, are a transit peptide targeting the chloroplast; sequence MLQLCSTFRPQLLLPCQFRFTNGVLIPQINYVASNSVVNIRPMIRC. The tract at residues 49 to 69 is disordered; sequence ASGGRGGANRSKPAKPQVKEG. One can recognise an S1-like domain in the interval 63–138; it reads KPQVKEGSNK…TKGRIIFRMS (76 aa).

This sequence belongs to the IF-1 family. Component of the 30S ribosomal translation pre-initiation complex which assembles on the 30S ribosome in the order IF-2 and IF-3, IF-1 and N-formylmethionyl-tRNA(fMet); mRNA recruitment can occur at any time during PIC assembly.

The protein localises to the plastid. The protein resides in the chloroplast. One of the essential components for the initiation of protein synthesis. Stabilizes the binding of IF-2 and IF-3 on the 30S subunit to which N-formylmethionyl-tRNA(fMet) subsequently binds. Helps modulate mRNA selection, yielding the 30S pre-initiation complex (PIC). Upon addition of the 50S ribosomal subunit IF-1, IF-2 and IF-3 are released leaving the mature 70S translation initiation complex. The chain is Translation initiation factor IF-1, chloroplastic from Arabidopsis thaliana (Mouse-ear cress).